The chain runs to 146 residues: Large ribosomal subunit protein uL15 (146 aa).

A compositionally biased stretch (basic and acidic residues) spans 1 to 18; that stretch reads MKLHELKPAEGSRKERNR. The interval 1 to 54 is disordered; sequence MKLHELKPAEGSRKERNRVGRGVATGNGKTSGRGHKGQKARSGGGVRPGFEGGQ. The span at 42–52 shows a compositional bias: gly residues; sequence SGGGVRPGFEG.

This sequence belongs to the universal ribosomal protein uL15 family. Part of the 50S ribosomal subunit.

In terms of biological role, binds to the 23S rRNA. This chain is Large ribosomal subunit protein uL15, found in Staphylococcus aureus (strain Mu3 / ATCC 700698).